Consider the following 127-residue polypeptide: Small ribosomal subunit protein uS11 (127 aa).

The protein belongs to the universal ribosomal protein uS11 family. As to quaternary structure, part of the 30S ribosomal subunit. Interacts with proteins S7 and S18. Binds to IF-3.

Its function is as follows. Located on the platform of the 30S subunit, it bridges several disparate RNA helices of the 16S rRNA. Forms part of the Shine-Dalgarno cleft in the 70S ribosome. The protein is Small ribosomal subunit protein uS11 of Rickettsia rickettsii (strain Iowa).